Consider the following 232-residue polypeptide: Phosphatidylserine decarboxylase proenzyme (232 aa).

The Schiff-base intermediate with substrate; via pyruvic acid role is filled by serine 190. At serine 190 the chain carries Pyruvic acid (Ser); by autocatalysis.

The protein belongs to the phosphatidylserine decarboxylase family. PSD-A subfamily. As to quaternary structure, heterodimer of a large membrane-associated beta subunit and a small pyruvoyl-containing alpha subunit. Requires pyruvate as cofactor. In terms of processing, is synthesized initially as an inactive proenzyme. Formation of the active enzyme involves a self-maturation process in which the active site pyruvoyl group is generated from an internal serine residue via an autocatalytic post-translational modification. Two non-identical subunits are generated from the proenzyme in this reaction, and the pyruvate is formed at the N-terminus of the alpha chain, which is derived from the carboxyl end of the proenzyme. The post-translation cleavage follows an unusual pathway, termed non-hydrolytic serinolysis, in which the side chain hydroxyl group of the serine supplies its oxygen atom to form the C-terminus of the beta chain, while the remainder of the serine residue undergoes an oxidative deamination to produce ammonia and the pyruvoyl prosthetic group on the alpha chain.

The protein localises to the cell membrane. The catalysed reaction is a 1,2-diacyl-sn-glycero-3-phospho-L-serine + H(+) = a 1,2-diacyl-sn-glycero-3-phosphoethanolamine + CO2. It functions in the pathway phospholipid metabolism; phosphatidylethanolamine biosynthesis; phosphatidylethanolamine from CDP-diacylglycerol: step 2/2. In terms of biological role, catalyzes the formation of phosphatidylethanolamine (PtdEtn) from phosphatidylserine (PtdSer). This chain is Phosphatidylserine decarboxylase proenzyme, found in Allorhizobium ampelinum (strain ATCC BAA-846 / DSM 112012 / S4) (Agrobacterium vitis (strain S4)).